Consider the following 287-residue polypeptide: Transmembrane protein 71 (287 aa).

The interval 1-25 is disordered; that stretch reads MYRDSPLMSTPVANDSRSDEGPSGK. Transmembrane regions (helical) follow at residues 218–238 and 244–264; these read AGLM…LVIS and FVGG…IAYV.

Belongs to the TMEM71 family.

Its subcellular location is the membrane. In Mus musculus (Mouse), this protein is Transmembrane protein 71 (Tmem71).